A 165-amino-acid chain; its full sequence is Regulator of ribonuclease activity A (165 aa).

Belongs to the RraA family. In terms of assembly, homotrimer. Binds to both RNA-binding sites in the C-terminal region of Rne and to RhlB.

The protein resides in the cytoplasm. Its function is as follows. Globally modulates RNA abundance by binding to RNase E (Rne) and regulating its endonucleolytic activity. Can modulate Rne action in a substrate-dependent manner by altering the composition of the degradosome. Modulates RNA-binding and helicase activities of the degradosome. This Pseudoalteromonas translucida (strain TAC 125) protein is Regulator of ribonuclease activity A.